Consider the following 157-residue polypeptide: Phosphopantetheine adenylyltransferase (157 aa).

Position 10 (T10) interacts with substrate. ATP-binding positions include 10–11 and H18; that span reads TF. Residues K42, L74, and R88 each coordinate substrate. ATP is bound by residues 89–91, E99, and 124–130; these read GLR and NAFISSS.

The protein belongs to the bacterial CoaD family. Homohexamer. Mg(2+) serves as cofactor.

It is found in the cytoplasm. The enzyme catalyses (R)-4'-phosphopantetheine + ATP + H(+) = 3'-dephospho-CoA + diphosphate. It participates in cofactor biosynthesis; coenzyme A biosynthesis; CoA from (R)-pantothenate: step 4/5. Reversibly transfers an adenylyl group from ATP to 4'-phosphopantetheine, yielding dephospho-CoA (dPCoA) and pyrophosphate. This chain is Phosphopantetheine adenylyltransferase, found in Helicobacter pylori (strain Shi470).